The chain runs to 197 residues: ATP-dependent Clp protease proteolytic subunit (197 aa).

Catalysis depends on Ser-101, which acts as the Nucleophile. The active site involves His-126.

This sequence belongs to the peptidase S14 family. In terms of assembly, component of the chloroplastic Clp protease core complex.

It is found in the plastid. The protein localises to the chloroplast stroma. It catalyses the reaction Hydrolysis of proteins to small peptides in the presence of ATP and magnesium. alpha-casein is the usual test substrate. In the absence of ATP, only oligopeptides shorter than five residues are hydrolyzed (such as succinyl-Leu-Tyr-|-NHMec, and Leu-Tyr-Leu-|-Tyr-Trp, in which cleavage of the -Tyr-|-Leu- and -Tyr-|-Trp bonds also occurs).. Its function is as follows. Cleaves peptides in various proteins in a process that requires ATP hydrolysis. Has a chymotrypsin-like activity. Plays a major role in the degradation of misfolded proteins. The protein is ATP-dependent Clp protease proteolytic subunit of Daucus carota (Wild carrot).